We begin with the raw amino-acid sequence, 113 residues long: U11-theraphotoxin-Hhn1h (113 aa).

The signal sequence occupies residues 1–21 (MNTVRVTFLLVFVLVVSLGQA). A propeptide spanning residues 22–74 (DKDENRMEMQEKTEQGKSYLDFAENLLLQKLEELEAKLLEEDSEESRNSRQKR) is cleaved from the precursor. The interval 61 to 83 (EEDSEESRNSRQKRRIGEGVPCD) is disordered. Cystine bridges form between Cys-82-Cys-95 and Cys-89-Cys-110.

It belongs to the neurotoxin 14 (magi-1) family. 01 (HNTX-16) subfamily. In terms of tissue distribution, expressed by the venom gland.

It localises to the secreted. In terms of biological role, probable ion channel inhibitor. The polypeptide is U11-theraphotoxin-Hhn1h (Cyriopagopus hainanus (Chinese bird spider)).